A 150-amino-acid chain; its full sequence is UPF0208 membrane protein VIBHAR_02941 (150 aa).

The next 2 helical transmembrane spans lie at Phe-42–Asn-62 and Ala-70–Ser-90.

It belongs to the UPF0208 family.

It is found in the cell inner membrane. This chain is UPF0208 membrane protein VIBHAR_02941, found in Vibrio campbellii (strain ATCC BAA-1116).